A 73-amino-acid polypeptide reads, in one-letter code: Translation initiation factor IF-1 (73 aa).

Residues 1 to 73 form the S1-like domain; sequence MAKKDGAIEV…TRGRIVYRYK (73 aa).

It belongs to the IF-1 family. In terms of assembly, component of the 30S ribosomal translation pre-initiation complex which assembles on the 30S ribosome in the order IF-2 and IF-3, IF-1 and N-formylmethionyl-tRNA(fMet); mRNA recruitment can occur at any time during PIC assembly.

Its subcellular location is the cytoplasm. In terms of biological role, one of the essential components for the initiation of protein synthesis. Stabilizes the binding of IF-2 and IF-3 on the 30S subunit to which N-formylmethionyl-tRNA(fMet) subsequently binds. Helps modulate mRNA selection, yielding the 30S pre-initiation complex (PIC). Upon addition of the 50S ribosomal subunit IF-1, IF-2 and IF-3 are released leaving the mature 70S translation initiation complex. This is Translation initiation factor IF-1 from Mycolicibacterium gilvum (strain PYR-GCK) (Mycobacterium gilvum (strain PYR-GCK)).